The primary structure comprises 256 residues: UPF0246 protein HCH_04801 (256 aa).

The protein belongs to the UPF0246 family.

The sequence is that of UPF0246 protein HCH_04801 from Hahella chejuensis (strain KCTC 2396).